A 393-amino-acid chain; its full sequence is Lipid-A-disaccharide synthase (393 aa).

The protein belongs to the LpxB family.

It catalyses the reaction a lipid X + a UDP-2-N,3-O-bis[(3R)-3-hydroxyacyl]-alpha-D-glucosamine = a lipid A disaccharide + UDP + H(+). The protein operates within bacterial outer membrane biogenesis; LPS lipid A biosynthesis. Condensation of UDP-2,3-diacylglucosamine and 2,3-diacylglucosamine-1-phosphate to form lipid A disaccharide, a precursor of lipid A, a phosphorylated glycolipid that anchors the lipopolysaccharide to the outer membrane of the cell. The protein is Lipid-A-disaccharide synthase of Bordetella pertussis (strain Tohama I / ATCC BAA-589 / NCTC 13251).